A 259-amino-acid chain; its full sequence is 5'-nucleotidase SurE (259 aa).

The a divalent metal cation site is built by Asp-8, Asp-9, Ser-39, and Asn-98.

It belongs to the SurE nucleotidase family. A divalent metal cation serves as cofactor.

The protein resides in the cytoplasm. The catalysed reaction is a ribonucleoside 5'-phosphate + H2O = a ribonucleoside + phosphate. Functionally, nucleotidase that shows phosphatase activity on nucleoside 5'-monophosphates. This is 5'-nucleotidase SurE from Fervidobacterium nodosum (strain ATCC 35602 / DSM 5306 / Rt17-B1).